The chain runs to 414 residues: Serine/threonine transporter SstT (414 aa).

At 2 to 15 (TTQRSPGLFRRLAH) the chain is on the cytoplasmic side. Residues 16–36 (GSLVKQILVGLVLGILLAWIS) form a helical membrane-spanning segment. At 37–45 (KPAAEAVGL) the chain is on the periplasmic side. The helical transmembrane segment at 46-66 (LGTLFVGALKAVAPILVLMLV) threads the bilayer. Residues 67-83 (MASIANHQHGQKTNILP) lie on the Cytoplasmic side of the membrane. The helical transmembrane segment at 84–104 (ILFLYLLGTFSAALAAVVFSF) threads the bilayer. Residues 105–142 (AFPSTLHLSSSAGDISPPSGIVEVMRGLVMSMVSNPID) lie on the Periplasmic side of the membrane. A helical membrane pass occupies residues 143–163 (ALLKGNYIGILVWAIGLGFAL). The Cytoplasmic segment spans residues 164-179 (RHGNETTKNLVNDMSN). A helical transmembrane segment spans residues 180 to 200 (AVTFMVKLVIRFAPIGIFGLV). Residues 201–217 (SSTLATTGFSTLWGYAQ) are Periplasmic-facing. Residues 218–238 (LLVVLVGCMLLVALVVNPLLV) form a helical membrane-spanning segment. Topologically, residues 239 to 299 (WWKIRRNPFP…VSIPLGATIN (61 aa)) are cytoplasmic. Residues 300–320 (MAGAAITITVLTLAAVNTLGI) form a helical membrane-spanning segment. Residues 321–331 (PVDLPTALLLS) are Periplasmic-facing. The helical transmembrane segment at 332-352 (VVASLCACGASGVAGGSLLLI) threads the bilayer. The Cytoplasmic portion of the chain corresponds to 353-414 (PLACNMFGIS…DRLANSALRN (62 aa)).

Belongs to the dicarboxylate/amino acid:cation symporter (DAACS) (TC 2.A.23) family.

It localises to the cell inner membrane. It carries out the reaction L-serine(in) + Na(+)(in) = L-serine(out) + Na(+)(out). The catalysed reaction is L-threonine(in) + Na(+)(in) = L-threonine(out) + Na(+)(out). In terms of biological role, involved in the import of serine and threonine into the cell, with the concomitant import of sodium (symport system). The chain is Serine/threonine transporter SstT from Shigella dysenteriae serotype 1 (strain Sd197).